A 222-amino-acid chain; its full sequence is Glutathione transferase GST 23 (222 aa).

The GST N-terminal domain occupies 4–83; it reads KGVKVLGMWA…YIDEVWKGGY (80 aa). Residues serine 14, lysine 41, valine 55, and 67 to 68 each bind glutathione; that span reads ES. In terms of domain architecture, GST C-terminal spans 89–220; the sequence is DPYERAQARF…ANKARREQLL (132 aa).

The protein belongs to the GST superfamily.

The catalysed reaction is RX + glutathione = an S-substituted glutathione + a halide anion + H(+). Involved in multiple disease resistance (MDR). The protein is Glutathione transferase GST 23 of Zea mays (Maize).